We begin with the raw amino-acid sequence, 37 residues long: Large ribosomal subunit protein bL36 (37 aa).

This sequence belongs to the bacterial ribosomal protein bL36 family.

In Laribacter hongkongensis (strain HLHK9), this protein is Large ribosomal subunit protein bL36.